Consider the following 443-residue polypeptide: Thymidine phosphorylase (443 aa).

The protein belongs to the thymidine/pyrimidine-nucleoside phosphorylase family. Homodimer.

It carries out the reaction thymidine + phosphate = 2-deoxy-alpha-D-ribose 1-phosphate + thymine. It participates in pyrimidine metabolism; dTMP biosynthesis via salvage pathway; dTMP from thymine: step 1/2. The enzymes which catalyze the reversible phosphorolysis of pyrimidine nucleosides are involved in the degradation of these compounds and in their utilization as carbon and energy sources, or in the rescue of pyrimidine bases for nucleotide synthesis. In Shewanella sp. (strain MR-7), this protein is Thymidine phosphorylase.